Here is a 222-residue protein sequence, read N- to C-terminus: tRNA (guanine-N(1)-)-methyltransferase (222 aa).

S-adenosyl-L-methionine contacts are provided by residues glycine 112 and 132–137 (IGDYVL).

It belongs to the RNA methyltransferase TrmD family. Homodimer.

The protein localises to the cytoplasm. The enzyme catalyses guanosine(37) in tRNA + S-adenosyl-L-methionine = N(1)-methylguanosine(37) in tRNA + S-adenosyl-L-homocysteine + H(+). Specifically methylates guanosine-37 in various tRNAs. This is tRNA (guanine-N(1)-)-methyltransferase from Azobacteroides pseudotrichonymphae genomovar. CFP2.